The chain runs to 497 residues: Glycerol kinase (497 aa).

Thr12 contributes to the ADP binding site. ATP contacts are provided by Thr12, Thr13, and Ser14. Thr12 contacts sn-glycerol 3-phosphate. Arg16 provides a ligand contact to ADP. Residues Arg82, Glu83, Tyr134, and Asp243 each contribute to the sn-glycerol 3-phosphate site. Glycerol-binding residues include Arg82, Glu83, Tyr134, Asp243, and Gln244. Thr265 and Gly308 together coordinate ADP. 4 residues coordinate ATP: Thr265, Gly308, Gln312, and Gly409. ADP is bound by residues Gly409 and Asn413.

Belongs to the FGGY kinase family. In terms of assembly, homotetramer and homodimer (in equilibrium).

It carries out the reaction glycerol + ATP = sn-glycerol 3-phosphate + ADP + H(+). Its pathway is polyol metabolism; glycerol degradation via glycerol kinase pathway; sn-glycerol 3-phosphate from glycerol: step 1/1. Activated by phosphorylation and inhibited by fructose 1,6-bisphosphate (FBP). Its function is as follows. Key enzyme in the regulation of glycerol uptake and metabolism. Catalyzes the phosphorylation of glycerol to yield sn-glycerol 3-phosphate. The polypeptide is Glycerol kinase (Caldanaerobacter subterraneus subsp. tengcongensis (strain DSM 15242 / JCM 11007 / NBRC 100824 / MB4) (Thermoanaerobacter tengcongensis)).